A 182-amino-acid polypeptide reads, in one-letter code: Putative manganese efflux pump MntP (182 aa).

Helical transmembrane passes span 7–27 (IISIILLAIGLSMDGFSVSLG), 38–58 (IAYIGLTIGFLHMLMPLAGML), 71–91 (TSFAGGVLLFLIGAHMFFSAF), 106–126 (LWIIAFSVSLDSFTVGLGLGI), 131–151 (IFVTLFAFGIVSCFLTWLGML), and 159–179 (FLGVYSELLGGSILCGFGIFI).

This sequence belongs to the MntP (TC 9.B.29) family.

It is found in the cell membrane. Functionally, probably functions as a manganese efflux pump. This is Putative manganese efflux pump MntP from Oceanobacillus iheyensis (strain DSM 14371 / CIP 107618 / JCM 11309 / KCTC 3954 / HTE831).